The following is a 764-amino-acid chain: MSTRATRPGMLHQKENAADAQAGKRQRTAAGSAARAPLSANAAPPAPDPAIEFAGRDDVDALLNEKMKGKNKMDYKGKSEQMMEYIKKLRACIKWLLEREDTNLAEIGKLNGLLEAAEKHHSEIVAQLKSAIEESKAINEELQRQYASLEENLKRVEAEKLDALRSYGDEKEARIAVEASRNEHLEDLRRIKLEEKRLNDQIKMLQDTNKRLQEYNTSLQQYNSNLQADATKNGETIAKLQKEKNTMVETMNGLKDHANSVKMQLDLAKSSQNEALKQKTDLLKEVDNLRGELQQVRDDRDHKLAEIHSLLADVSTYKEMTGKSVAELDNAMTRSTALEETCSSQAERIKTLELQLASANEKLKRSDLTTMETMTEYEKQKRMLEDLQLRLEEAEQQILDGENLRKRLHNTILELKGNIRVFCRVRPLLPNESGAVAYPKSGENLGRGIELTHNAQMYSFTFDKVFEQSASQEDVFIEISQLIQSALDGYKVCIFAYGQTGSGKTYTMMGNPELHDQKGLIPRSLEQIFQTSQALISQGWKYKMQASMLEIYNEAIRDLLATNRTTVQDGGASKYSIKHDANGNTHVSDLTIVDVSSINEVSSLLKRAAQSRSVGRTQMNEESSRSHCVFTLRIFGVNEGTDQQVQGVLNLIDLAGSERLNKSGATGDRLKETQAINKSLSCLSDVIFSIAKKEEHVPFRNSKLTYLLQPCLGGDSKTLMFVNLSPEVSSTGESICSLRFAARVNSCEIGIPRRQTQVRSLAQG.

Positions 1 to 50 are disordered; sequence MSTRATRPGMLHQKENAADAQAGKRQRTAAGSAARAPLSANAAPPAPDPA. A compositionally biased stretch (low complexity) spans 29 to 50; it reads AAGSAARAPLSANAAPPAPDPA. Positions 105 to 416 form a coiled coil; the sequence is AEIGKLNGLL…RLHNTILELK (312 aa). Positions 418–747 constitute a Kinesin motor domain; it reads NIRVFCRVRP…LRFAARVNSC (330 aa). 498 to 505 serves as a coordination point for ATP; it reads GQTGSGKT.

The protein belongs to the TRAFAC class myosin-kinesin ATPase superfamily. Kinesin family. KIN-14 subfamily.

The protein is Kinesin-like protein KIN-14N of Oryza sativa subsp. japonica (Rice).